A 430-amino-acid chain; its full sequence is Trigger factor (430 aa).

One can recognise a PPIase FKBP-type domain in the interval 157–242 (GDLVALETWS…AVEVSEPVLP (86 aa)).

It belongs to the FKBP-type PPIase family. Tig subfamily.

The protein localises to the cytoplasm. The enzyme catalyses [protein]-peptidylproline (omega=180) = [protein]-peptidylproline (omega=0). In terms of biological role, involved in protein export. Acts as a chaperone by maintaining the newly synthesized protein in an open conformation. Functions as a peptidyl-prolyl cis-trans isomerase. This is Trigger factor from Xanthomonas campestris pv. campestris (strain B100).